The chain runs to 227 residues: 7-cyano-7-deazaguanine synthase (227 aa).

ATP is bound at residue 7–17 (VSGGMDSLVAT). Cys-187, Cys-195, Cys-198, and Cys-201 together coordinate Zn(2+).

It belongs to the QueC family. Zn(2+) serves as cofactor.

The enzyme catalyses 7-carboxy-7-deazaguanine + NH4(+) + ATP = 7-cyano-7-deazaguanine + ADP + phosphate + H2O + H(+). The protein operates within purine metabolism; 7-cyano-7-deazaguanine biosynthesis. Functionally, catalyzes the ATP-dependent conversion of 7-carboxy-7-deazaguanine (CDG) to 7-cyano-7-deazaguanine (preQ(0)). The polypeptide is 7-cyano-7-deazaguanine synthase (Chlorobaculum parvum (strain DSM 263 / NCIMB 8327) (Chlorobium vibrioforme subsp. thiosulfatophilum)).